Here is a 285-residue protein sequence, read N- to C-terminus: MTSRPALRRYAVIGNPITHSRSPQIHAMFAAQTGISLEYERIPAPLDGFRATAEAFFLAGGQGLNVTVPFKQEAFELAREHLSARARMAGAVNTLTWRDGVLQGCNTDGVGLVNDLIRLGVMLQGARLLLVGAGGAARGVLQPLAEAGCAEIRIVNRSPGRAAELLAAWTASGIPGGVQTSAGALDEAGGAWDIVINATASSLHDLAPALPGGLYAPGALAYDMVYGARPTPFMRQARADGAALTADGLGMLVGQAAESFFIWHGLRPDPTAVLTTLRANLLAED.

Shikimate-binding positions include 20 to 22 (SRS) and Thr-67. The active-site Proton acceptor is the Lys-71. 2 residues coordinate shikimate: Asn-93 and Asp-108. Residues 132–136 (GAGGA) and Met-224 each bind NADP(+). Tyr-226 lines the shikimate pocket. Gly-248 contributes to the NADP(+) binding site.

Belongs to the shikimate dehydrogenase family. In terms of assembly, homodimer.

The enzyme catalyses shikimate + NADP(+) = 3-dehydroshikimate + NADPH + H(+). It functions in the pathway metabolic intermediate biosynthesis; chorismate biosynthesis; chorismate from D-erythrose 4-phosphate and phosphoenolpyruvate: step 4/7. In terms of biological role, involved in the biosynthesis of the chorismate, which leads to the biosynthesis of aromatic amino acids. Catalyzes the reversible NADPH linked reduction of 3-dehydroshikimate (DHSA) to yield shikimate (SA). The polypeptide is Shikimate dehydrogenase (NADP(+)) (Bordetella avium (strain 197N)).